The following is a 442-amino-acid chain: Thymidine phosphorylase (442 aa).

The protein belongs to the thymidine/pyrimidine-nucleoside phosphorylase family. In terms of assembly, homodimer.

It carries out the reaction thymidine + phosphate = 2-deoxy-alpha-D-ribose 1-phosphate + thymine. It participates in pyrimidine metabolism; dTMP biosynthesis via salvage pathway; dTMP from thymine: step 1/2. Its function is as follows. The enzymes which catalyze the reversible phosphorolysis of pyrimidine nucleosides are involved in the degradation of these compounds and in their utilization as carbon and energy sources, or in the rescue of pyrimidine bases for nucleotide synthesis. In Vibrio parahaemolyticus serotype O3:K6 (strain RIMD 2210633), this protein is Thymidine phosphorylase.